A 158-amino-acid chain; its full sequence is Class 10 plant pathogenesis-related protein 2B (158 aa).

Residue D8 coordinates trans-zeatin. P32, V35, and I38 together coordinate Ca(2+). E60, H69, Y81, and Y83 together coordinate trans-zeatin. Y83 provides a ligand contact to melatonin.

Belongs to the BetVI family.

Its subcellular location is the cytoplasm. The protein localises to the cytosol. Functionally, class II ribonuclease (RNase). Binds to several cytokinins including natural adenine-type (e.g. trans-zeatin and kinetin) and artificial urea-type (e.g. N,N'-diphenylurea and N-phenyl-N'-(2-chloro-4-pyridyl)urea) hormones. Interacts with melatonin. The protein is Class 10 plant pathogenesis-related protein 2B of Lupinus luteus (European yellow lupine).